Here is a 429-residue protein sequence, read N- to C-terminus: Glutamate-1-semialdehyde 2,1-aminomutase 2 (429 aa).

At Lys268 the chain carries N6-(pyridoxal phosphate)lysine.

This sequence belongs to the class-III pyridoxal-phosphate-dependent aminotransferase family. HemL subfamily. Homodimer. Pyridoxal 5'-phosphate serves as cofactor.

It is found in the cytoplasm. It carries out the reaction (S)-4-amino-5-oxopentanoate = 5-aminolevulinate. The protein operates within porphyrin-containing compound metabolism; protoporphyrin-IX biosynthesis; 5-aminolevulinate from L-glutamyl-tRNA(Glu): step 2/2. In Staphylococcus aureus (strain Mu50 / ATCC 700699), this protein is Glutamate-1-semialdehyde 2,1-aminomutase 2.